Reading from the N-terminus, the 169-residue chain is S-ribosylhomocysteine lyase (169 aa).

3 residues coordinate Fe cation: histidine 54, histidine 58, and cysteine 128.

Belongs to the LuxS family. In terms of assembly, homodimer. Fe cation serves as cofactor.

It carries out the reaction S-(5-deoxy-D-ribos-5-yl)-L-homocysteine = (S)-4,5-dihydroxypentane-2,3-dione + L-homocysteine. Functionally, involved in the synthesis of autoinducer 2 (AI-2) which is secreted by bacteria and is used to communicate both the cell density and the metabolic potential of the environment. The regulation of gene expression in response to changes in cell density is called quorum sensing. Catalyzes the transformation of S-ribosylhomocysteine (RHC) to homocysteine (HC) and 4,5-dihydroxy-2,3-pentadione (DPD). The polypeptide is S-ribosylhomocysteine lyase (Shewanella piezotolerans (strain WP3 / JCM 13877)).